The sequence spans 277 residues: General transcription factor IIF subunit 2 (277 aa).

It belongs to the TFIIF beta subunit family. Heterodimer of an alpha and a beta subunit.

It is found in the nucleus. Its function is as follows. TFIIF is a general transcription initiation factor that binds to RNA polymerase II and helps to recruit it to the initiation complex in collaboration with TFIIB. This chain is General transcription factor IIF subunit 2 (TfIIFbeta), found in Drosophila melanogaster (Fruit fly).